The following is a 461-amino-acid chain: Bifunctional protein HldE (461 aa).

The tract at residues 1-312 (MLEFLSQQKP…IRSFKSMSFE (312 aa)) is ribokinase. 191–194 (NKKE) lines the ATP pocket. Asp259 is a catalytic residue. The cytidylyltransferase stretch occupies residues 334–461 (FTNGCFDIVH…KIIEKIKDKK (128 aa)).

This sequence in the N-terminal section; belongs to the carbohydrate kinase PfkB family. The protein in the C-terminal section; belongs to the cytidylyltransferase family. In terms of assembly, homodimer.

The catalysed reaction is D-glycero-beta-D-manno-heptose 7-phosphate + ATP = D-glycero-beta-D-manno-heptose 1,7-bisphosphate + ADP + H(+). The enzyme catalyses D-glycero-beta-D-manno-heptose 1-phosphate + ATP + H(+) = ADP-D-glycero-beta-D-manno-heptose + diphosphate. It functions in the pathway nucleotide-sugar biosynthesis; ADP-L-glycero-beta-D-manno-heptose biosynthesis; ADP-L-glycero-beta-D-manno-heptose from D-glycero-beta-D-manno-heptose 7-phosphate: step 1/4. It participates in nucleotide-sugar biosynthesis; ADP-L-glycero-beta-D-manno-heptose biosynthesis; ADP-L-glycero-beta-D-manno-heptose from D-glycero-beta-D-manno-heptose 7-phosphate: step 3/4. In terms of biological role, catalyzes the phosphorylation of D-glycero-D-manno-heptose 7-phosphate at the C-1 position to selectively form D-glycero-beta-D-manno-heptose-1,7-bisphosphate. Its function is as follows. Catalyzes the ADP transfer from ATP to D-glycero-beta-D-manno-heptose 1-phosphate, yielding ADP-D-glycero-beta-D-manno-heptose. The polypeptide is Bifunctional protein HldE (Campylobacter jejuni (strain RM1221)).